A 613-amino-acid polypeptide reads, in one-letter code: Pescadillo homolog (613 aa).

Positions 259–344 form a coiled coil; it reads KELSNELETK…MKQIEHDIIX (86 aa). Residues 268–333 are disordered; it reads KESTEDNIIE…KNDQKNDQKN (66 aa). Residues 278 to 333 show a composition bias toward basic and acidic residues; that stretch reads ENEKKTKNGKTENCEKNDQENEKKTKNDKTKNCEKNDQKNDQKNDQKNDQKNDQKN. In terms of domain architecture, BRCT spans 350 to 453; it reads SVKNLFKNHI…MILSCEDYNI (104 aa). Residues 485-517 are disordered; sequence LSEDPQYNKSIQKNKTNSENKXNNYNDNENDMS. Residues 492-601 adopt a coiled-coil conformation; sequence NKSIQKNKTN…ENRQKLTIEK (110 aa). The segment covering 497 to 511 has biased composition (low complexity); it reads KNKTNSENKXNNYND.

It belongs to the pescadillo family.

Its subcellular location is the nucleus. The protein resides in the nucleolus. It localises to the nucleoplasm. Functionally, required for maturation of ribosomal RNAs and formation of the large ribosomal subunit. The sequence is that of Pescadillo homolog from Plasmodium yoelii yoelii.